Consider the following 326-residue polypeptide: Nine-heme cytochrome c (326 aa).

The N-terminal stretch at 1–30 is a signal peptide; that stretch reads MRNGTSLLLLAAIALAGAACLTAMGGTAKA. The heme site is built by histidine 67, histidine 70, cysteine 77, cysteine 80, histidine 81, histidine 82, cysteine 89, cysteine 92, histidine 93, histidine 111, cysteine 127, cysteine 130, histidine 131, cysteine 141, cysteine 144, histidine 145, cysteine 157, cysteine 160, histidine 161, histidine 227, histidine 230, histidine 248, cysteine 255, cysteine 258, histidine 259, histidine 260, cysteine 271, cysteine 274, histidine 275, histidine 294, cysteine 297, cysteine 300, histidine 301, cysteine 314, cysteine 317, and histidine 318.

In terms of assembly, monomer. Binds 9 heme groups per subunit.

Its subcellular location is the periplasm. May form part of a transmembrane redox complex through which electrons are transferred to the cytoplasm for reduction of sulfate. This chain is Nine-heme cytochrome c, found in Desulfovibrio desulfuricans (strain ATCC 27774 / DSM 6949 / MB).